Consider the following 497-residue polypeptide: Protein nucleotidyltransferase YdiU (497 aa).

8 residues coordinate ATP: glycine 92, glycine 94, arginine 95, lysine 114, aspartate 126, glycine 127, arginine 177, and arginine 184. Aspartate 261 (proton acceptor) is an active-site residue. Asparagine 262 and aspartate 271 together coordinate Mg(2+). Aspartate 271 contacts ATP.

The protein belongs to the SELO family. Mg(2+) is required as a cofactor. It depends on Mn(2+) as a cofactor.

The catalysed reaction is L-seryl-[protein] + ATP = 3-O-(5'-adenylyl)-L-seryl-[protein] + diphosphate. It carries out the reaction L-threonyl-[protein] + ATP = 3-O-(5'-adenylyl)-L-threonyl-[protein] + diphosphate. It catalyses the reaction L-tyrosyl-[protein] + ATP = O-(5'-adenylyl)-L-tyrosyl-[protein] + diphosphate. The enzyme catalyses L-histidyl-[protein] + UTP = N(tele)-(5'-uridylyl)-L-histidyl-[protein] + diphosphate. The catalysed reaction is L-seryl-[protein] + UTP = O-(5'-uridylyl)-L-seryl-[protein] + diphosphate. It carries out the reaction L-tyrosyl-[protein] + UTP = O-(5'-uridylyl)-L-tyrosyl-[protein] + diphosphate. In terms of biological role, nucleotidyltransferase involved in the post-translational modification of proteins. It can catalyze the addition of adenosine monophosphate (AMP) or uridine monophosphate (UMP) to a protein, resulting in modifications known as AMPylation and UMPylation. In Bordetella petrii (strain ATCC BAA-461 / DSM 12804 / CCUG 43448), this protein is Protein nucleotidyltransferase YdiU.